The sequence spans 223 residues: Phosphoribosylformylglycinamidine synthase subunit PurQ (223 aa).

The region spanning 4-223 (FAVVVFPGTN…FKGMVEWVRS (220 aa)) is the Glutamine amidotransferase type-1 domain. Residue Cys-85 is the Nucleophile of the active site. Catalysis depends on residues His-196 and Glu-198.

Part of the FGAM synthase complex composed of 1 PurL, 1 PurQ and 2 PurS subunits.

The protein localises to the cytoplasm. The catalysed reaction is N(2)-formyl-N(1)-(5-phospho-beta-D-ribosyl)glycinamide + L-glutamine + ATP + H2O = 2-formamido-N(1)-(5-O-phospho-beta-D-ribosyl)acetamidine + L-glutamate + ADP + phosphate + H(+). It catalyses the reaction L-glutamine + H2O = L-glutamate + NH4(+). Its pathway is purine metabolism; IMP biosynthesis via de novo pathway; 5-amino-1-(5-phospho-D-ribosyl)imidazole from N(2)-formyl-N(1)-(5-phospho-D-ribosyl)glycinamide: step 1/2. Functionally, part of the phosphoribosylformylglycinamidine synthase complex involved in the purines biosynthetic pathway. Catalyzes the ATP-dependent conversion of formylglycinamide ribonucleotide (FGAR) and glutamine to yield formylglycinamidine ribonucleotide (FGAM) and glutamate. The FGAM synthase complex is composed of three subunits. PurQ produces an ammonia molecule by converting glutamine to glutamate. PurL transfers the ammonia molecule to FGAR to form FGAM in an ATP-dependent manner. PurS interacts with PurQ and PurL and is thought to assist in the transfer of the ammonia molecule from PurQ to PurL. This Pyrococcus furiosus (strain ATCC 43587 / DSM 3638 / JCM 8422 / Vc1) protein is Phosphoribosylformylglycinamidine synthase subunit PurQ.